Here is a 92-residue protein sequence, read N- to C-terminus: Small ribosomal subunit protein uS19c (92 aa).

It belongs to the universal ribosomal protein uS19 family.

It is found in the plastid. The protein localises to the chloroplast. Its function is as follows. Protein S19 forms a complex with S13 that binds strongly to the 16S ribosomal RNA. In Chara vulgaris (Common stonewort), this protein is Small ribosomal subunit protein uS19c.